Here is a 579-residue protein sequence, read N- to C-terminus: MSEKHPGPLVVEGKLSDAERMKLESNYLRGTIAEDLNDGLTGGFKGDNFLLIRFHGMYQQDDRDIRAERAAQKLEPRHAMLLRCRLPGGVITTTQWQAIDKFAADNTIYGSIRLTNRQTFQFHGILKKNVKPVHQMLHSVGLDALATANDMNRNVLCTSNPYESQLHAEAYEWAKKISEHLLPRTRAYAEIWLDQEKVATTDEEPILGATYLPRKFKTTVVIPPQNDIDLHANDMNFVAIAENGKLVGFNLLVGGGLSIEHGNKKTYARTASEFGYLPLEHTLAVAEAVVTTQRDWGNRTDRKNAKTKYTLERVGVDTFKEEVERRAGIKFEPIRPYEFTGRGDRIGWVKGIDNNWHLTLFIENGRILDYPGRPLKTGLLEIAKIHQGEFRITANQNLIIASVPESQKAKIEKLARDHGLMNAVSAQRENSMACVSFPTCPLAMAEAERFLPSFTDKVEAILEKHGIPDEHIVMRVTGCPNGCGRAMLAEIGLVGKAPGRYNLHLGGNRIGTRIPRMYQENITEPDILASLDQLIGRWAKEREAGEGFGDFTVRAGIIRPVLDPARDFWDNLNCRMASV.

The [4Fe-4S] cluster site is built by C434, C440, C479, and C483. Position 483 (C483) interacts with siroheme.

The protein belongs to the nitrite and sulfite reductase 4Fe-4S domain family. In terms of assembly, alpha(8)-beta(8). The alpha component is a flavoprotein, the beta component is a hemoprotein. Siroheme serves as cofactor. It depends on [4Fe-4S] cluster as a cofactor.

It catalyses the reaction hydrogen sulfide + 3 NADP(+) + 3 H2O = sulfite + 3 NADPH + 4 H(+). It functions in the pathway sulfur metabolism; hydrogen sulfide biosynthesis; hydrogen sulfide from sulfite (NADPH route): step 1/1. In terms of biological role, component of the sulfite reductase complex that catalyzes the 6-electron reduction of sulfite to sulfide. This is one of several activities required for the biosynthesis of L-cysteine from sulfate. The sequence is that of Sulfite reductase [NADPH] hemoprotein beta-component from Salmonella choleraesuis (strain SC-B67).